A 625-amino-acid chain; its full sequence is TORTIFOLIA1-like protein 4 (625 aa).

The interval methionine 1–aspartate 34 is disordered. Low complexity predominate over residues proline 12 to proline 29. HEAT repeat units lie at residues aspartate 69 to aspartate 106, proline 110 to arginine 147, proline 149 to aspartate 186, glutamate 190 to alanine 227, and lysine 230 to leucine 268. The disordered stretch occupies residues serine 391 to glutamate 466. Composition is skewed to basic and acidic residues over residues lysine 404–alanine 413, isoleucine 420–lysine 434, and aspartate 455–glutamate 466. Serine 475 carries the post-translational modification Phosphoserine. The segment at glycine 582–threonine 625 is disordered. The span at methionine 612 to threonine 625 shows a compositional bias: polar residues.

In Arabidopsis thaliana (Mouse-ear cress), this protein is TORTIFOLIA1-like protein 4.